Here is a 300-residue protein sequence, read N- to C-terminus: N-acetylmannosamine kinase (300 aa).

Residues 5-12 and 132-139 contribute to the ATP site; these read ALDIGGTK and GVGGGIVL. Zn(2+)-binding residues include His-156, Cys-166, Cys-168, and Cys-173.

Belongs to the ROK (NagC/XylR) family. NanK subfamily. As to quaternary structure, homodimer.

It catalyses the reaction an N-acyl-D-mannosamine + ATP = an N-acyl-D-mannosamine 6-phosphate + ADP + H(+). It participates in amino-sugar metabolism; N-acetylneuraminate degradation; D-fructose 6-phosphate from N-acetylneuraminate: step 2/5. Functionally, catalyzes the phosphorylation of N-acetylmannosamine (ManNAc) to ManNAc-6-P. This is N-acetylmannosamine kinase from Haemophilus influenzae (strain PittEE).